The chain runs to 390 residues: Protein arginine N-methyltransferase 7 (390 aa).

Positions 1–11 are enriched in basic residues; sequence MPPKQHRHQKK. Residues 1 to 20 form a disordered region; that stretch reads MPPKQHRHQKKDKNDNALQN. The SAM-dependent MTase PRMT-type domain occupies 55–372; sequence ARLRHTPVSL…SGDRVILHMQ (318 aa). Catalysis depends on residues Glu172 and Glu181.

It belongs to the class I-like SAM-binding methyltransferase superfamily. Protein arginine N-methyltransferase family. PRMT7 subfamily. As to quaternary structure, present in large multiprotein complexes.

Its subcellular location is the cytoplasm. In terms of biological role, arginine methyltransferase that specifically catalyzes the formation of omega-N monomethylarginine (MMA). Has activity toward multiple substrates in vitro. Able to mediate the arginine methylation of histones and myelin basic protein (MBP) in vitro; the relevance of such results is however unclear in vivo. In Trypanosoma brucei brucei (strain 927/4 GUTat10.1), this protein is Protein arginine N-methyltransferase 7 (PRMT7).